The chain runs to 187 residues: Ribosome-recycling factor (187 aa).

This sequence belongs to the RRF family.

Its subcellular location is the cytoplasm. Its function is as follows. Responsible for the release of ribosomes from messenger RNA at the termination of protein biosynthesis. May increase the efficiency of translation by recycling ribosomes from one round of translation to another. In Orientia tsutsugamushi (strain Ikeda) (Rickettsia tsutsugamushi), this protein is Ribosome-recycling factor.